A 476-amino-acid chain; its full sequence is Calcium uptake protein 1, mitochondrial (476 aa).

A mitochondrion-targeting transit peptide spans 1–33; sequence MFRLNSLSALAELAVGSRWYHGGSQPIQIRRRL. The interval 68–106 is disordered; sequence SDIGDKGKNKDEGDVCNHEKKTADLAPHPEEKKKKRSGF. The tract at residues 99–110 is polybasic region; it reads KKKKRSGFRDRK. Ser122 carries the post-translational modification Phosphoserine. The k/R-ring stretch occupies residues 126–129; that stretch reads KIFR. One can recognise an EF-hand 1 domain in the interval 218 to 253; that stretch reads TPQRNFEIAFKMFDLNGDGEVDMEEFEQVQSIIRSQ. Residues Asp231, Asn233, Asp235, Glu237, and Glu242 each contribute to the Ca(2+) site. The tract at residues 259–263 is k/R-ring; the sequence is RHRDR. Residues 408 to 443 form the EF-hand 2 domain; that stretch reads LSDHVCDVVFALFDCDGNGELSNKEFVSIMKQRLMR. Asp421, Asp423, Asn425, Glu427, and Glu432 together coordinate Ca(2+). Arg455 bears the Asymmetric dimethylarginine mark. Positions 455–465 are C-helix region; it reads RLMQAMWKCAQ.

Belongs to the MICU1 family. MICU1 subfamily. In terms of assembly, heterodimer; disulfide-linked; heterodimerizes with MICU2 or MICU3. Homodimer; disulfide-linked. Component of the uniplex complex, composed of MCU, EMRE/SMDT1, MICU1 and MICU2 (or MICU3) in a 4:4:1:1 stoichiometry. The composition of calcium sensors within the uniplex complex can differ depending on tissues: a MICU1 homodimer can be present instead of the MICU1-MICU2 heterodimer in skeletal-muscle and kidney. MICU1 is recruited to the uniplex complex by EMRE/SMDT1, and it associates with MCU at low calcium levels, occluding the pore of the MCU channel. Associates with the MICOS complex. Interacts with SLC25A23. Interacts with CHCHD4/MIA40; which introduces the interchain disulfide bond with MICU2. Interacts (when methylated) with UCP2; leading to decrease the calcium sensitivity of MICU1. Phosphorylation at Ser-122 by AKT1 impairs its maturation and stability. Post-translationally, asymmetric dimethylation at Arg-455 by PRMT1 decreases the calcium sensitivity of MICU1 by promoting interaction with UCP2. In terms of processing, degraded by YME1L1 when not complexed as homodimer or heterodimer. Not degraded when complexed as homodimer or heterodimer; the presence of the interchain disulfide bond protecting MICU1 from degradation by YME1L1. Expressed in epithelial cell lines. Strongly expressed in epidermal keratinocytes and dermal endothelial cells.

It is found in the mitochondrion intermembrane space. The protein resides in the mitochondrion inner membrane. Its activity is regulated as follows. Activated by spermine, kaempferol and SB202190, which bind MICU1 and prevent MCU pore occlusion in absence of calcium. Functionally, calcium sensor of the mitochondrial calcium uniporter (MCU) channel, which senses calcium level via its EF-hand domains. MICU1 and MICU2 (or MICU3) form a disulfide-linked heterodimer that stimulates and inhibits MCU activity, depending on the concentration of calcium. At low calcium levels, MICU1 occludes the pore of the MCU channel, preventing mitochondrial calcium uptake. At higher calcium levels, calcium-binding to MICU1 and MICU2 (or MICU3) induces a conformational change that weakens MCU-MICU1 interactions and moves the MICU1-MICU2 heterodimer away from the pore, allowing calcium permeation through the MCU channel. Also required to protect against manganese toxicity by preventing manganese uptake by MCU: mechanistically, manganese-binding to its EF-hand domains does not induce any conformational change, maintaining MCU pore occlusion. Also acts as a barrier for inhibitors of the MCU channel, such as ruthenium red or its derivative Ru360. Acts as a regulator of mitochondrial cristae structure independently of its ability to regulate the mitochondrial calcium uniporter channel. Regulates glucose-dependent insulin secretion in pancreatic beta-cells by regulating mitochondrial calcium uptake. Induces T-helper 1-mediated autoreactivity, which is accompanied by the release of IFNG. Isoform that regulates mitochondrial calcium uniporter (MCU) in the skeletal muscle. Compared to other isoforms, this isoform has higher affinity for calcium, promoting mitochondrial calcium uptake at lower calcium concentrations. This allows a rapid response of mitochondrial metabolism and ensures sustained ATP production needed for resistance and strenuous exercise. The sequence is that of Calcium uptake protein 1, mitochondrial from Homo sapiens (Human).